The sequence spans 319 residues: Cytochrome f (319 aa).

An N-terminal signal peptide occupies residues M1 to A34. Y35, C55, C58, and H59 together coordinate heme. Residues V285 to K305 traverse the membrane as a helical segment.

Belongs to the cytochrome f family. In terms of assembly, the 4 large subunits of the cytochrome b6-f complex are cytochrome b6, subunit IV (17 kDa polypeptide, petD), cytochrome f and the Rieske protein, while the 4 small subunits are PetG, PetL, PetM and PetN. The complex functions as a dimer. Heme serves as cofactor.

The protein localises to the plastid. It localises to the chloroplast thylakoid membrane. Its function is as follows. Component of the cytochrome b6-f complex, which mediates electron transfer between photosystem II (PSII) and photosystem I (PSI), cyclic electron flow around PSI, and state transitions. In Pinus koraiensis (Korean pine), this protein is Cytochrome f.